We begin with the raw amino-acid sequence, 374 residues long: Trichodiene synthase (374 aa).

D100, E164, N225, S229, E233, D239, and I241 together coordinate Mg(2+). Residues 100–104 (DDSKD) form an aspartate-rich domain region.

Belongs to the trichodiene synthase family. The cofactor is Mg(2+). Mn(2+) serves as cofactor.

The enzyme catalyses (2E,6E)-farnesyl diphosphate = trichodiene + diphosphate. The protein operates within sesquiterpene biosynthesis; trichothecene biosynthesis. With respect to regulation, benzyl triethylammonium cation (BTAC) acts as a competitive inhibitor of trichodiene synthase reaction in the presence of pyrophosphate (PPi). Functionally, trichodiene synthase; part of the core gene cluster that mediates the biosynthesis of trichothecenes, a very large family of chemically related bicyclic sesquiterpene compounds acting as mycotoxins, including T2-toxin. The biosynthesis of trichothecenes begins with the cyclization of farnesyl diphosphate to trichodiene and is catalyzed by the trichodiene synthase TRI5. Trichodiene undergoes a series of oxygenations catalyzed by the cytochrome P450 monooxygenase TRI4. TRI4 controls the addition of four oxygens at C-2, C-3, C-11, and the C-12, C-13-epoxide to form the intermediate isotrichotriol. Isotrichotriol then undergoes a non-enzymatic isomerization and cyclization to form isotrichodermol. During this process, the oxygen at the C-2 position becomes the pyran ring oxygen and the hydroxyl group at C-11 is lost. More complex type A trichothecenes are built by modifying isotrichodermol through a series of paired hydroxylation and acetylation or acylation steps. Isotrichodermol is converted to isotrichodermin by the acetyltransferase TRI101. TRI101 encodes a C-3 transacetylase that acts as a self-protection or resistance factor during biosynthesis and that the presence of a free C-3 hydroxyl group is a key component of Fusarium trichothecene phytotoxicity. A second hydroxyl group is added to C-15 by the trichothecene C-15 hydroxylase TRI11, producing 15-decalonectrin, which is then acetylated by TRI3, producing calonectrin. A third hydroxyl group is added at C-4 by the cytochrome P450 monooxygenase TRI13, converting calonectrin to 3,15-diacetoxyspirpenol, which is subsequently acetylated by the acetyltransferase TRI7. A fourth hydroxyl group is added to C-8 by the cytochrome P450 monooxygenase TRI1, followed by the addition of an isovaleryl moiety by TRI16. Finally, the acetyl group is removed from the C-3 position by the trichothecene C-3 esterase TRI8 to produce T-2 toxin. The chain is Trichodiene synthase from Fusarium sporotrichioides.